The chain runs to 222 residues: Ribosomal RNA small subunit methyltransferase G (222 aa).

S-adenosyl-L-methionine is bound by residues Gly-84, Phe-89, 141-142 (VE), and Arg-154.

The protein belongs to the methyltransferase superfamily. RNA methyltransferase RsmG family.

The protein localises to the cytoplasm. It catalyses the reaction guanosine(527) in 16S rRNA + S-adenosyl-L-methionine = N(7)-methylguanosine(527) in 16S rRNA + S-adenosyl-L-homocysteine. Specifically methylates the N7 position of guanine in position 527 of 16S rRNA. This is Ribosomal RNA small subunit methyltransferase G from Bradyrhizobium sp. (strain ORS 278).